A 329-amino-acid polypeptide reads, in one-letter code: Bifunctional nuclease 2 (329 aa).

Residues 121–256 form the BFN domain; the sequence is CVHNNPQGGN…YLAYSDGMRV (136 aa). A UVR domain is found at 287–322; that stretch reads DTKEFDLVRNMMQAVDEERYDEAAEWRDKLGKFQAK.

Belongs to the bifunctional nuclease family.

The protein localises to the nucleus. Bifunctional nuclease with both RNase and DNase activities. Involved in basal defense response. Participates in abscisic acid-derived callose deposition following infection by a necrotrophic pathogen. The sequence is that of Bifunctional nuclease 2 (BBD2) from Arabidopsis thaliana (Mouse-ear cress).